The primary structure comprises 643 residues: Galactan 5-O-arabinofuranosyltransferase (643 aa).

Helical transmembrane passes span 25-45 (VLVALGQLAAAVVVAVGVAVV), 66-86 (ALTTVGQVGCLAGLVGIGWLW), 97-117 (LGGLVLVSAFTVVTLGMPLGA), 180-200 (FKPWAITSMAIAVAVALVLWW), 205-225 (FEYALLVTVATAAVMLAYSSP), 229-249 (AAMITVLLPPMLVLTWSGLGA), 255-272 (WAAVVGAGVFLGFAATWY), 276-293 (VAYGAFTVVLMALLLAGS), 309-329 (LAVVGAIAAAIGSTTWLPYLL), 355-375 (FPMLQFSLLGAICLLGTLWLV), 384-404 (AGALAIGVLAVYLWSLLSMLA), 420-440 (LSVLLVAAGAFGFVEAVQALG), and 445-465 (GVIPMAAAIGLAGAIAFSQDI). The Extracellular portion of the chain corresponds to 466–643 (PDVLRPDLTI…LAIRKPQESA (178 aa)).

Belongs to the glycosyltransferase 85 family.

It is found in the cell membrane. The catalysed reaction is Adds an alpha-D-arabinofuranosyl group from trans,octacis-decaprenylphospho-beta-D-arabinofuranose at the 5-O-position of the eighth, tenth and twelfth galactofuranose unit of the galactofuranan chain of [beta-D-galactofuranosyl-(1-&gt;5)-beta-D-galactofuranosyl-(1-&gt;6)]14-beta-D-galactofuranosyl-(1-&gt;5)-beta-D-galactofuranosyl-(1-&gt;4)-alpha-L-rhamnopyranosyl-(1-&gt;3)-N-acetyl-alpha-D-glucosaminyl-diphospho-trans,octacis-decaprenol.. It participates in cell wall biogenesis; cell wall polysaccharide biosynthesis. Functionally, involved in the biosynthesis of the arabinogalactan (AG) region of the mycolylarabinogalactan-peptidoglycan (mAGP) complex, an essential component of the mycobacterial cell wall. Catalyzes the addition of the first key arabinofuranosyl (Araf) residue from the sugar donor decaprenyl-phospho-arabinose (DPA) on the C-5 of a 6-linked galactofuranosyl (Galf) of the galactan domain, thus 'priming' the galactan for further elaboration by other arabinofuranosyltransferases. It is not able to add an Araf residue to a terminal Galf. This Mycobacterium tuberculosis (strain CDC 1551 / Oshkosh) protein is Galactan 5-O-arabinofuranosyltransferase.